The primary structure comprises 105 residues: Pyrimidine/purine nucleoside phosphorylase (105 aa).

This sequence belongs to the nucleoside phosphorylase PpnP family.

The enzyme catalyses a purine D-ribonucleoside + phosphate = a purine nucleobase + alpha-D-ribose 1-phosphate. The catalysed reaction is adenosine + phosphate = alpha-D-ribose 1-phosphate + adenine. It catalyses the reaction cytidine + phosphate = cytosine + alpha-D-ribose 1-phosphate. It carries out the reaction guanosine + phosphate = alpha-D-ribose 1-phosphate + guanine. The enzyme catalyses inosine + phosphate = alpha-D-ribose 1-phosphate + hypoxanthine. The catalysed reaction is thymidine + phosphate = 2-deoxy-alpha-D-ribose 1-phosphate + thymine. It catalyses the reaction uridine + phosphate = alpha-D-ribose 1-phosphate + uracil. It carries out the reaction xanthosine + phosphate = alpha-D-ribose 1-phosphate + xanthine. In terms of biological role, catalyzes the phosphorolysis of diverse nucleosides, yielding D-ribose 1-phosphate and the respective free bases. Can use uridine, adenosine, guanosine, cytidine, thymidine, inosine and xanthosine as substrates. Also catalyzes the reverse reactions. The sequence is that of Pyrimidine/purine nucleoside phosphorylase from Cupriavidus necator (strain ATCC 17699 / DSM 428 / KCTC 22496 / NCIMB 10442 / H16 / Stanier 337) (Ralstonia eutropha).